Reading from the N-terminus, the 521-residue chain is Bifunctional purine biosynthesis protein PurH (521 aa).

One can recognise an MGS-like domain in the interval 1–145 (MIKQALISVS…KNHRDVTVVV (145 aa)).

This sequence belongs to the PurH family.

It catalyses the reaction (6R)-10-formyltetrahydrofolate + 5-amino-1-(5-phospho-beta-D-ribosyl)imidazole-4-carboxamide = 5-formamido-1-(5-phospho-D-ribosyl)imidazole-4-carboxamide + (6S)-5,6,7,8-tetrahydrofolate. It carries out the reaction IMP + H2O = 5-formamido-1-(5-phospho-D-ribosyl)imidazole-4-carboxamide. The protein operates within purine metabolism; IMP biosynthesis via de novo pathway; 5-formamido-1-(5-phospho-D-ribosyl)imidazole-4-carboxamide from 5-amino-1-(5-phospho-D-ribosyl)imidazole-4-carboxamide (10-formyl THF route): step 1/1. It participates in purine metabolism; IMP biosynthesis via de novo pathway; IMP from 5-formamido-1-(5-phospho-D-ribosyl)imidazole-4-carboxamide: step 1/1. This is Bifunctional purine biosynthesis protein PurH from Burkholderia vietnamiensis (strain G4 / LMG 22486) (Burkholderia cepacia (strain R1808)).